We begin with the raw amino-acid sequence, 404 residues long: Tryptophan synthase beta chain (404 aa).

The residue at position 90 (K90) is an N6-(pyridoxal phosphate)lysine.

This sequence belongs to the TrpB family. Tetramer of two alpha and two beta chains. The cofactor is pyridoxal 5'-phosphate.

It catalyses the reaction (1S,2R)-1-C-(indol-3-yl)glycerol 3-phosphate + L-serine = D-glyceraldehyde 3-phosphate + L-tryptophan + H2O. It functions in the pathway amino-acid biosynthesis; L-tryptophan biosynthesis; L-tryptophan from chorismate: step 5/5. Its function is as follows. The beta subunit is responsible for the synthesis of L-tryptophan from indole and L-serine. This Geobacillus thermodenitrificans (strain NG80-2) protein is Tryptophan synthase beta chain.